The following is a 515-amino-acid chain: Acetyltransferase sphE (515 aa).

Active-site proton acceptor residues include histidine 184 and aspartate 438.

This sequence belongs to the plant acyltransferase family. Monomer.

The catalysed reaction is sphingofungin B + acetyl-CoA = sphingofungin C + CoA. The protein operates within secondary metabolite biosynthesis. Acetyltransferase; part of the gene cluster that mediates the biosynthesis of sphingofungins, bioactive molecules acting as sphingolipid inhibitors via inhibiting serine palmitoyl transferase (SPT). Within the pathway, sphE catalyzes the O-acetylation of the C-5 hydroxyl group of sphingofungin B to produce sphingofungin C. SphE can also convert sphingofungin B1 into sphingofungin C1 and sphingofungin B2 into sphingofungin C2. Sphingofungin biosynthesis starts with the PKS sphB that produces an C18 polyketide precursor 3-hydroxyoctadeca-4,10-dienoyl-ACP containing one delta-6 desaturation and one delta-12 desaturation. The aminoacyl transferase sphA uses the sphB product to produce 3-keto-presphingofungin by adding an aminomalonate molecule. SphF then reduces the C-3 ketone of 3-keto-presphingofungin which leads to presphingofungin. The cytochrome P450 monooxygenase sphH converts presphingofungin into sphingofungin B1 which is further converted to sphingofungin B by the dioxygenase sphC. SphC is also able to convert presphingofungin into sphingofungin B2. The acetyltransferase sphE acetylates sphingofungin B to produce sphingofungin C, but can also convert sphingofungin B1 into sphingofungin C1 and sphingofungin B2 into sphingofungin C2. Finally, sphingofungin C can be spontaneously converted into sphingofungin D. This is Acetyltransferase sphE from Aspergillus fumigatus (strain CBS 144.89 / FGSC A1163 / CEA10) (Neosartorya fumigata).